The primary structure comprises 38 residues: Photosystem II reaction center protein Y (38 aa).

A helical transmembrane segment spans residues 4–22 (TIVVFAPIIAALAWVVFNI).

It belongs to the PsbY family. As to quaternary structure, PSII is composed of 1 copy each of membrane proteins PsbA, PsbB, PsbC, PsbD, PsbE, PsbF, PsbH, PsbI, PsbJ, PsbK, PsbL, PsbM, PsbT, PsbX, PsbY, Psb30/Ycf12, peripheral proteins PsbO, CyanoQ (PsbQ), PsbU, PsbV and a large number of cofactors. It forms dimeric complexes.

Its subcellular location is the cellular thylakoid membrane. In terms of biological role, loosely associated component of the core of photosystem II (PSII), it is not always seen in crystals. PSII is a light-driven water plastoquinone oxidoreductase, using light energy to abstract electrons from H(2)O, generating a proton gradient subsequently used for ATP formation. The polypeptide is Photosystem II reaction center protein Y (Prochlorococcus marinus (strain MIT 9215)).